Reading from the N-terminus, the 615-residue chain is 1-deoxy-D-xylulose-5-phosphate synthase (615 aa).

Thiamine diphosphate-binding positions include histidine 72 and glycine 113–alanine 115. Mg(2+) is bound at residue aspartate 144. Residues glycine 145–alanine 146, asparagine 173, tyrosine 281, and glutamate 360 contribute to the thiamine diphosphate site. Asparagine 173 is a binding site for Mg(2+).

It belongs to the transketolase family. DXPS subfamily. As to quaternary structure, homodimer. Mg(2+) serves as cofactor. The cofactor is thiamine diphosphate.

It carries out the reaction D-glyceraldehyde 3-phosphate + pyruvate + H(+) = 1-deoxy-D-xylulose 5-phosphate + CO2. The protein operates within metabolic intermediate biosynthesis; 1-deoxy-D-xylulose 5-phosphate biosynthesis; 1-deoxy-D-xylulose 5-phosphate from D-glyceraldehyde 3-phosphate and pyruvate: step 1/1. Its function is as follows. Catalyzes the acyloin condensation reaction between C atoms 2 and 3 of pyruvate and glyceraldehyde 3-phosphate to yield 1-deoxy-D-xylulose-5-phosphate (DXP). This is 1-deoxy-D-xylulose-5-phosphate synthase from Thermus thermophilus (strain ATCC BAA-163 / DSM 7039 / HB27).